Here is a 1038-residue protein sequence, read N- to C-terminus: Rap guanine nucleotide exchange factor 1 (1038 aa).

10–140 (RLSPLHTFSD…DILTDETPSD (131 aa)) lines the a nucleoside 3',5'-cyclic phosphate pocket. Positions 234-316 (TDNHQVIRDI…KTNSYYRWVQ (83 aa)) constitute a DEP domain. A nucleoside 3',5'-cyclic phosphate is bound at residue 375–492 (ALSHLSTMVK…VRLKDYGEDV (118 aa)). An N-terminal Ras-GEF domain is found at 516–654 (CGYSVMAGKA…DILTRIGSIR (139 aa)). A Ras-GEF domain is found at 795–1028 (DSQELAHQLF…MQLSYEIEPK (234 aa)).

As to quaternary structure, interacts (via C-terminus) with drn-1. In terms of tissue distribution, expressed specifically in neurons including the nerve ring, ventral and dorsal nerve cord motor neurons and tail ganglia.

Its function is as follows. Guanine nucleotide-releasing protein. Together with GTPase drn-1, may regulate acetylcholine release at the neuromuscular junctions probably downstream of G-protein gsa-1 and adenylate cyclase acy-1. In Caenorhabditis elegans, this protein is Rap guanine nucleotide exchange factor 1 (epac-1).